Reading from the N-terminus, the 717-residue chain is Ribosomal RNA large subunit methyltransferase K/L (717 aa).

The THUMP domain maps to 43 to 154 (IGYKACLWSR…KGKANITLDL (112 aa)).

The protein belongs to the methyltransferase superfamily. RlmKL family.

It is found in the cytoplasm. The enzyme catalyses guanosine(2445) in 23S rRNA + S-adenosyl-L-methionine = N(2)-methylguanosine(2445) in 23S rRNA + S-adenosyl-L-homocysteine + H(+). It catalyses the reaction guanosine(2069) in 23S rRNA + S-adenosyl-L-methionine = N(2)-methylguanosine(2069) in 23S rRNA + S-adenosyl-L-homocysteine + H(+). Its function is as follows. Specifically methylates the guanine in position 2445 (m2G2445) and the guanine in position 2069 (m7G2069) of 23S rRNA. The polypeptide is Ribosomal RNA large subunit methyltransferase K/L (Aeromonas hydrophila subsp. hydrophila (strain ATCC 7966 / DSM 30187 / BCRC 13018 / CCUG 14551 / JCM 1027 / KCTC 2358 / NCIMB 9240 / NCTC 8049)).